A 250-amino-acid chain; its full sequence is CCN family member 5 (250 aa).

The N-terminal stretch at 1-23 (MRGSPLIRLLATSFLCLLSMVCA) is a signal peptide. 6 cysteine pairs are disulfide-bonded: C22/C50, C26/C52, C32/C53, C39/C56, C64/C78, and C70/C100. In terms of domain architecture, IGFBP N-terminal spans 24 to 103 (QLCRTPCTCP…DEDDGDCEVN (80 aa)). Residues 98–164 (GDCEVNGRRY…GKCCPEWVCD (67 aa)) form the VWFC domain. Residues 194–238 (WPNWSTAWGPCSTTCGLGIATRVSNQNRFCQLEIQRRLCLPRPCL) form the TSP type-1 domain. N-linked (GlcNAc...) asparagine glycosylation occurs at N196.

This sequence belongs to the CCN family.

Its subcellular location is the secreted. Functionally, may play an important role in modulating bone turnover. Promotes the adhesion of osteoblast cells and inhibits the binding of fibrinogen to integrin receptors. In addition, inhibits osteocalcin production. This is CCN family member 5 (Ccn5) from Rattus norvegicus (Rat).